A 95-amino-acid polypeptide reads, in one-letter code: MKIYFIVGLLFMAMVAIMAAPVEDEFEPLEHFENEERADRHRRVTCDLLSFKGQVNDSACAANCLSLGKAGGHCEKGVCICRKTSFKDLWDKRFG.

The signal sequence occupies residues 1 to 19 (MKIYFIVGLLFMAMVAIMA). Positions 20–43 (APVEDEFEPLEHFENEERADRHRR) are excised as a propeptide. 3 cysteine pairs are disulfide-bonded: cysteine 46–cysteine 74, cysteine 60–cysteine 79, and cysteine 64–cysteine 81. Phenylalanine 94 bears the Phenylalanine amide mark.

The protein resides in the secreted. Functionally, found in royal jelly and in hemolymph, potent antibacterial protein against Gram-positive bacteria at low concentration. The chain is Defensin-1 from Apis mellifera carnica (Carniolan honeybee).